Consider the following 355-residue polypeptide: UDP-N-acetylglucosamine--N-acetylmuramyl-(pentapeptide) pyrophosphoryl-undecaprenol N-acetylglucosamine transferase (355 aa).

UDP-N-acetyl-alpha-D-glucosamine-binding positions include threonine 15 to glycine 17, asparagine 127, arginine 163, serine 191, isoleucine 244, alanine 263 to glutamate 268, and glutamine 288.

It belongs to the glycosyltransferase 28 family. MurG subfamily.

It localises to the cell inner membrane. It catalyses the reaction di-trans,octa-cis-undecaprenyl diphospho-N-acetyl-alpha-D-muramoyl-L-alanyl-D-glutamyl-meso-2,6-diaminopimeloyl-D-alanyl-D-alanine + UDP-N-acetyl-alpha-D-glucosamine = di-trans,octa-cis-undecaprenyl diphospho-[N-acetyl-alpha-D-glucosaminyl-(1-&gt;4)]-N-acetyl-alpha-D-muramoyl-L-alanyl-D-glutamyl-meso-2,6-diaminopimeloyl-D-alanyl-D-alanine + UDP + H(+). The protein operates within cell wall biogenesis; peptidoglycan biosynthesis. Cell wall formation. Catalyzes the transfer of a GlcNAc subunit on undecaprenyl-pyrophosphoryl-MurNAc-pentapeptide (lipid intermediate I) to form undecaprenyl-pyrophosphoryl-MurNAc-(pentapeptide)GlcNAc (lipid intermediate II). In Salmonella arizonae (strain ATCC BAA-731 / CDC346-86 / RSK2980), this protein is UDP-N-acetylglucosamine--N-acetylmuramyl-(pentapeptide) pyrophosphoryl-undecaprenol N-acetylglucosamine transferase.